The chain runs to 463 residues: Metacaspase-1 (463 aa).

The segment at 1 to 149 (MSWNQYPGGG…PQLQGQGGQS (149 aa)) is disordered. Positions 7-18 (PGGGHHQQGGYG) are enriched in gly residues. Residues 20–56 (RPPPPQWAQQGPPPPPNMGYRPPPPPQAYYNNPPPPQ) are compositionally biased toward pro residues. A compositionally biased stretch (low complexity) spans 57 to 83 (QYQRPAPQQNGYQQGGYQQQQQSQGNY). Residues His-247 and Cys-309 contribute to the active site.

This sequence belongs to the peptidase C14B family.

Functionally, involved in cell death (apoptosis). This is Metacaspase-1 (MCA1) from Cryptococcus neoformans var. neoformans serotype D (strain B-3501A) (Filobasidiella neoformans).